Reading from the N-terminus, the 604-residue chain is Pescadillo homolog (604 aa).

The tract at residues 275–299 (NSEPAGLIEDKEGEDNKESSKTDES) is disordered. Over residues 282 to 299 (IEDKEGEDNKESSKTDES) the composition is skewed to basic and acidic residues. The BRCT domain occupies 337-427 (ECRSLFKNLK…IILPTEGYIV (91 aa)). Disordered regions lie at residues 518–557 (KTFS…DAAD) and 574–604 (IEIN…AKGR). Composition is skewed to basic and acidic residues over residues 531–557 (VVDK…DAAD) and 577–586 (NQERKKDKVN).

The protein belongs to the pescadillo family.

Its subcellular location is the nucleus. It is found in the nucleolus. The protein resides in the nucleoplasm. Its function is as follows. Required for maturation of ribosomal RNAs and formation of the large ribosomal subunit. The sequence is that of Pescadillo homolog (PES) from Oryza sativa subsp. japonica (Rice).